Consider the following 494-residue polypeptide: Glycerol kinase (494 aa).

Threonine 13 lines the ADP pocket. Residues threonine 13, threonine 14, and serine 15 each coordinate ATP. Threonine 13 contacts sn-glycerol 3-phosphate. Residue arginine 17 coordinates ADP. Sn-glycerol 3-phosphate contacts are provided by arginine 83, glutamate 84, tyrosine 135, and aspartate 244. 5 residues coordinate glycerol: arginine 83, glutamate 84, tyrosine 135, aspartate 244, and glutamine 245. ADP is bound by residues threonine 266 and glycine 309. ATP contacts are provided by threonine 266, glycine 309, glutamine 313, and glycine 410. Residues glycine 410 and asparagine 414 each coordinate ADP.

It belongs to the FGGY kinase family.

The enzyme catalyses glycerol + ATP = sn-glycerol 3-phosphate + ADP + H(+). It functions in the pathway polyol metabolism; glycerol degradation via glycerol kinase pathway; sn-glycerol 3-phosphate from glycerol: step 1/1. With respect to regulation, inhibited by fructose 1,6-bisphosphate (FBP). In terms of biological role, key enzyme in the regulation of glycerol uptake and metabolism. Catalyzes the phosphorylation of glycerol to yield sn-glycerol 3-phosphate. This chain is Glycerol kinase, found in Shewanella baltica (strain OS195).